Reading from the N-terminus, the 218-residue chain is MLSPQEAAKIYHANYIRNSGAIGVLWAIFTICFAIVNIVCFIQPYWIGDGVDTPQAGYFGLFHFCIGSGFSKELTCTGSFTEFSSIPSGAFKAASFFIGLSMTLIIGCIVSFGLFFFCNTATVYKICAWMQLCSAACLVLGCMIFPDGWDADEVKRMCGEKTDKYSLGACSVRWAYILAIIGILDALILSFLAFVLGNRLDSLMAEQLKLESKDDGNA.

4 helical membrane-spanning segments follow: residues 22-42 (IGVLWAIFTICFAIVNIVCFI), 96-116 (FFIGLSMTLIIGCIVSFGLFF), 126-146 (ICAWMQLCSAACLVLGCMIFP), and 177-197 (ILAIIGILDALILSFLAFVLG).

This sequence belongs to the LHFP family.

Its subcellular location is the membrane. The polypeptide is LHFPL tetraspan subfamily member 3 protein (Xenopus laevis (African clawed frog)).